Consider the following 164-residue polypeptide: Phosphopantetheine adenylyltransferase (164 aa).

Ser9 lines the substrate pocket. ATP contacts are provided by residues 9–10 (SF) and His17. The substrate site is built by Lys41, Leu73, and Arg87. Residues 88–90 (GLR), Glu98, and 123–129 (YTFLSSS) contribute to the ATP site.

This sequence belongs to the bacterial CoaD family. As to quaternary structure, homohexamer. Mg(2+) serves as cofactor.

The protein localises to the cytoplasm. The enzyme catalyses (R)-4'-phosphopantetheine + ATP + H(+) = 3'-dephospho-CoA + diphosphate. The protein operates within cofactor biosynthesis; coenzyme A biosynthesis; CoA from (R)-pantothenate: step 4/5. Reversibly transfers an adenylyl group from ATP to 4'-phosphopantetheine, yielding dephospho-CoA (dPCoA) and pyrophosphate. The protein is Phosphopantetheine adenylyltransferase of Dictyoglomus thermophilum (strain ATCC 35947 / DSM 3960 / H-6-12).